The chain runs to 142 residues: Group IIE secretory phospholipase A2 (142 aa).

A signal peptide spans 1-19 (MKSPHVLVFLCLLVALVTG). 5 residues coordinate Ca(2+): Asp41, Gly43, Tyr45, Gly47, and Gly49. Cystine bridges form between Cys44–Cys135, Cys46–Cys62, Cys61–Cys115, Cys67–Cys142, Cys68–Cys108, Cys77–Cys101, and Cys95–Cys106. His65 is an active-site residue. Asp66 lines the Ca(2+) pocket. The active site involves Asp109. The Ca(2+) site is built by Tyr130 and Asn132.

The protein belongs to the phospholipase A2 family. It depends on Ca(2+) as a cofactor. As to expression, restricted to the brain, heart, lung, and placenta.

The protein localises to the secreted. The protein resides in the cytoplasm. The enzyme catalyses a 1,2-diacyl-sn-glycero-3-phosphoethanolamine + H2O = a 1-acyl-sn-glycero-3-phosphoethanolamine + a fatty acid + H(+). The catalysed reaction is 1-hexadecanoyl-2-(9Z-octadecenoyl)-sn-glycero-3-phosphoethanolamine + H2O = 1-hexadecanoyl-sn-glycero-3-phosphoethanolamine + (9Z)-octadecenoate + H(+). It carries out the reaction 1-hexadecanoyl-2-(9Z,12Z-octadecadienoyl)-sn-glycero-3-phosphoethanolamine + H2O = 1-hexadecanoyl-sn-glycero-3-phosphoethanolamine + (9Z,12Z)-octadecadienoate + H(+). It catalyses the reaction 1-hexadecanoyl-2-(5Z,8Z,11Z,14Z-eicosatetraenoyl)-sn-glycero-3-phosphoethanolamine + H2O = 1-hexadecanoyl-sn-glycero-3-phosphoethanolamine + (5Z,8Z,11Z,14Z)-eicosatetraenoate + H(+). The enzyme catalyses 1,2-dihexadecanoyl-sn-glycero-3-phospho-(1'-sn-glycerol) + H2O = 1-hexadecanoyl-sn-glycero-3-phospho-(1'-sn-glycerol) + hexadecanoate + H(+). The catalysed reaction is 1-hexadecanoyl-2-(9Z-octadecenoyl)-sn-glycero-3-phosphoglycerol + H2O = 1-hexadecanoyl-sn-glycero-3-phosphoglycerol + (9Z)-octadecenoate + H(+). It carries out the reaction a 1,2-diacyl-sn-glycero-3-phosphocholine + H2O = a 1-acyl-sn-glycero-3-phosphocholine + a fatty acid + H(+). It catalyses the reaction 1,2-dihexadecanoyl-sn-glycero-3-phosphocholine + H2O = 1-hexadecanoyl-sn-glycero-3-phosphocholine + hexadecanoate + H(+). The enzyme catalyses 1-hexadecanoyl-2-(9Z-octadecenoyl)-sn-glycero-3-phosphocholine + H2O = 1-hexadecanoyl-sn-glycero-3-phosphocholine + (9Z)-octadecenoate + H(+). The catalysed reaction is 1-hexadecanoyl-2-(9Z,12Z-octadecadienoyl)-sn-glycero-3-phosphocholine + H2O = (9Z,12Z)-octadecadienoate + 1-hexadecanoyl-sn-glycero-3-phosphocholine + H(+). It carries out the reaction 1-hexadecanoyl-2-(4Z,7Z,10Z,13Z,16Z,19Z-docosahexaenoyl)-sn-glycero-3-phosphocholine + H2O = (4Z,7Z,10Z,13Z,16Z,19Z)-docosahexaenoate + 1-hexadecanoyl-sn-glycero-3-phosphocholine + H(+). Functionally, secretory calcium-dependent phospholipase A2 that primarily targets extracellular phospholipids. Hydrolyzes the ester bond of the fatty acyl group attached at sn-2 position of phospholipids (phospholipase A2 activity), releasing various unsaturated fatty acids including oleoate, linoleoate, arachidonate, docosahexaenoate and lysophosphatidylethanolamines in preference to lysophosphatidylcholines. In response to high-fat diet, hydrolyzes minor lipoprotein phospholipids including phosphatidylserines, phosphatidylinositols and phosphatidylglycerols, altering lipoprotein composition and fat storage in adipose tissue and liver. May act in an autocrine and paracrine manner. Contributes to lipid remodeling of cellular membranes and generation of lipid mediators involved in pathogen clearance. Cleaves sn-2 fatty acyl chains of phosphatidylglycerols and phosphatidylethanolamines, which are major components of membrane phospholipids in bacteria. Acts as a hair follicle phospholipase A2. Selectively releases lysophosphatidylethanolamines (LPE) and various unsaturated fatty acids in skin to regulate hair follicle homeostasis. May regulate the inflammatory response by releasing arachidonate, a precursor of prostaglandins and leukotrienes. Upon allergen exposure, may participate in allergic inflammatory response by enhancing leukotriene C4 synthesis and degranulation in mast cells. This is Group IIE secretory phospholipase A2 (PLA2G2E) from Homo sapiens (Human).